A 327-amino-acid chain; its full sequence is Chain length determinant protein (327 aa).

The Cytoplasmic portion of the chain corresponds to 1–31 (MTVDSNTSSGRGNDPEQIDLIELLLQLWRGK). A helical transmembrane segment spans residues 32 to 52 (MTIIVAVIIAILLAVGYLMIA). The Periplasmic segment spans residues 53–294 (KEKWTSTAII…LPVRRDSPKT (242 aa)). The chain crosses the membrane as a helical span at residues 295–315 (AITLVLAVLLGGMIGAGIVLG). Over 316-327 (RNALRSYKPKAL) the chain is Cytoplasmic.

The protein belongs to the WzzB/Cld/Rol family.

It is found in the cell inner membrane. Its pathway is bacterial outer membrane biogenesis; lipopolysaccharide biosynthesis. Functionally, confers a modal distribution of chain length on the O-antigen component of lipopolysaccharide (LPS). Gives rise to a reduced number of short chain molecules and increases in numbers of longer molecules, with a modal value of 20. The protein is Chain length determinant protein (wzzB) of Salmonella typhimurium (strain LT2 / SGSC1412 / ATCC 700720).